Consider the following 198-residue polypeptide: RNA pyrophosphohydrolase (198 aa).

Residues 6 to 149 enclose the Nudix hydrolase domain; the sequence is GYRPNVGIVI…KKEVYRKAMK (144 aa). The short motif at 38–59 is the Nudix box element; sequence GGINDNESAEQAMYRELFEEVG.

Belongs to the Nudix hydrolase family. RppH subfamily. A divalent metal cation is required as a cofactor.

Functionally, accelerates the degradation of transcripts by removing pyrophosphate from the 5'-end of triphosphorylated RNA, leading to a more labile monophosphorylated state that can stimulate subsequent ribonuclease cleavage. In Pasteurella multocida (strain Pm70), this protein is RNA pyrophosphohydrolase.